Here is a 244-residue protein sequence, read N- to C-terminus: ATP synthase subunit b 2 (244 aa).

A helical membrane pass occupies residues 2–22; the sequence is LIDWFTIVAQIINFLILVFLL.

This sequence belongs to the ATPase B chain family. In terms of assembly, F-type ATPases have 2 components, F(1) - the catalytic core - and F(0) - the membrane proton channel. F(1) has five subunits: alpha(3), beta(3), gamma(1), delta(1), epsilon(1). F(0) has four main subunits: a(1), b(1), b'(1) and c(10-14). The alpha and beta chains form an alternating ring which encloses part of the gamma chain. F(1) is attached to F(0) by a central stalk formed by the gamma and epsilon chains, while a peripheral stalk is formed by the delta, b and b' chains.

It is found in the cellular thylakoid membrane. Functionally, f(1)F(0) ATP synthase produces ATP from ADP in the presence of a proton or sodium gradient. F-type ATPases consist of two structural domains, F(1) containing the extramembraneous catalytic core and F(0) containing the membrane proton channel, linked together by a central stalk and a peripheral stalk. During catalysis, ATP synthesis in the catalytic domain of F(1) is coupled via a rotary mechanism of the central stalk subunits to proton translocation. Component of the F(0) channel, it forms part of the peripheral stalk, linking F(1) to F(0). The polypeptide is ATP synthase subunit b 2 (Crocosphaera subtropica (strain ATCC 51142 / BH68) (Cyanothece sp. (strain ATCC 51142))).